A 98-amino-acid chain; its full sequence is Large ribosomal subunit protein eL21 (98 aa).

Residues methionine 1–lysine 17 show a composition bias toward basic residues. The tract at residues methionine 1–threonine 28 is disordered.

Belongs to the eukaryotic ribosomal protein eL21 family.

This is Large ribosomal subunit protein eL21 from Methanobrevibacter smithii (strain ATCC 35061 / DSM 861 / OCM 144 / PS).